Here is a 589-residue protein sequence, read N- to C-terminus: Enhancer of polycomb-like protein 1 (589 aa).

Disordered regions lie at residues 298–339 (GDED…RPAE), 403–430 (MTPPASASSGSMDEPTPMDLDKPKPNPP), 468–497 (LPSPARDLSEEQSDRWKYDQSSDDEDDAPV), and 516–589 (LQTV…QPVS). A compositionally biased stretch (basic and acidic residues) spans 474–487 (DLSEEQSDRWKYDQ). Low complexity predominate over residues 557-566 (PQPNQSQSLP). The segment covering 567-589 (LPQPQQPVAQPQPQPQPQAQPVS) has biased composition (pro residues).

Belongs to the enhancer of polycomb family. Component of the NuA4 histone acetyltransferase complex.

It is found in the nucleus. Component of the NuA4 histone acetyltransferase complex which is involved in transcriptional activation of selected genes principally by acetylation of nucleosomal histone H4 and H2A. The NuA4 complex is also involved in DNA repair. Involved in gene silencing by neighboring heterochromatin, blockage of the silencing spreading along the chromosome, and required for cell cycle progression through G2/M. The protein is Enhancer of polycomb-like protein 1 (epl-1) of Neurospora crassa (strain ATCC 24698 / 74-OR23-1A / CBS 708.71 / DSM 1257 / FGSC 987).